The sequence spans 414 residues: Imidazolonepropionase (414 aa).

The Fe(3+) site is built by histidine 77 and histidine 79. 2 residues coordinate Zn(2+): histidine 77 and histidine 79. 4-imidazolone-5-propanoate contacts are provided by arginine 86, tyrosine 149, and histidine 184. Tyrosine 149 is an N-formimidoyl-L-glutamate binding site. Histidine 249 lines the Fe(3+) pocket. Residue histidine 249 coordinates Zn(2+). Glutamate 252 contacts 4-imidazolone-5-propanoate. Residue aspartate 323 participates in Fe(3+) binding. A Zn(2+)-binding site is contributed by aspartate 323. Positions 325 and 327 each coordinate N-formimidoyl-L-glutamate. Serine 328 lines the 4-imidazolone-5-propanoate pocket.

Belongs to the metallo-dependent hydrolases superfamily. HutI family. It depends on Zn(2+) as a cofactor. Requires Fe(3+) as cofactor.

Its subcellular location is the cytoplasm. The catalysed reaction is 4-imidazolone-5-propanoate + H2O = N-formimidoyl-L-glutamate. It participates in amino-acid degradation; L-histidine degradation into L-glutamate; N-formimidoyl-L-glutamate from L-histidine: step 3/3. Functionally, catalyzes the hydrolytic cleavage of the carbon-nitrogen bond in imidazolone-5-propanoate to yield N-formimidoyl-L-glutamate. It is the third step in the universal histidine degradation pathway. The polypeptide is Imidazolonepropionase (Phocaeicola vulgatus (strain ATCC 8482 / DSM 1447 / JCM 5826 / CCUG 4940 / NBRC 14291 / NCTC 11154) (Bacteroides vulgatus)).